Here is a 1482-residue protein sequence, read N- to C-terminus: Cystic fibrosis transmembrane conductance regulator (1482 aa).

Residues 1-77 (MQRSPLEKAS…KLINALRRCF (77 aa)) lie on the Cytoplasmic side of the membrane. Residues 78 to 98 (FWRFTFYGIILYLGEVTKAVQ) form a helical membrane-spanning segment. Positions 81–365 (FTFYGIILYL…WAVQTWYDSL (285 aa)) constitute an ABC transmembrane type-1 1 domain. Over 99 to 122 (PLLLGRIIASYDPDNKVERSIAIY) the chain is Extracellular. The chain crosses the membrane as a helical span at residues 123 to 146 (LAVGLCLLFVVRTLLLHPAIFGLH). At 147–195 (HIGMQMRIAMFSLIYKKTLKLSSRVLDKISIGQLVSLLSNNLNKFDEGL) the chain is on the cytoplasmic side. A helical membrane pass occupies residues 196 to 216 (ALAHFVWIAPLQVTLLMGLLW). Residues 217–222 (DLLQAS) are Extracellular-facing. Residues 223–243 (AFSGLGVLIILACFQAGFGRM) traverse the membrane as a helical segment. The Cytoplasmic segment spans residues 244–298 (MMKYRDQRAGKINERLVITSEMIENIQSVKAYCWEEALEKMIENFRQSELRLTRK). The helical transmembrane segment at 299 to 319 (AAYVRYFNSSAFFFSGFFVVF) threads the bilayer. Residues 320 to 339 (LSVLPYALIKGIILRKIFTT) are Extracellular-facing. The chain crosses the membrane as a helical span at residues 340–358 (ISFCIVLRMAVTRQFPWAV). Residues 359–859 (QTWYDSLGAI…YLRYITVHKR (501 aa)) are Cytoplasmic-facing. Residues tryptophan 401, serine 434, 458–465 (GSTGAGKT), and glutamine 493 contribute to the ATP site. An ABC transporter 1 domain is found at 423-646 (NVDNSLFFSN…RPDFSSKLMG (224 aa)). Residue cysteine 524 is the site of S-palmitoyl cysteine attachment. 2 positions are modified to phosphoserine: serine 549 and serine 660. The interval 654–832 (SAERRNSIIT…EEINEEDLKE (179 aa)) is disordered R region. Serine 670 carries the phosphoserine; by PKA modification. Phosphoserine is present on serine 686. A Glycyl lysine isopeptide (Lys-Gly) (interchain with G-Cter in ubiquitin) cross-link involves residue lysine 688. Serine 700 and serine 712 each carry phosphoserine. Threonine 717 bears the Phosphothreonine mark. Serine 737, serine 768, serine 796, and serine 814 each carry phosphoserine. A helical membrane pass occupies residues 860–880 (LIFVLIWCFVVFLIEVAASLV). The region spanning 860–1156 (LIFVLIWCFV…AVNSSIDVDS (297 aa)) is the ABC transmembrane type-1 2 domain. Residues 881 to 919 (LLCLLSKVSPEDKGNTTKSANDSSAVIITSTSSFYFLYI) lie on the Extracellular side of the membrane. Residues asparagine 895 and asparagine 901 are each glycosylated (N-linked (GlcNAc...) asparagine). The chain crosses the membrane as a discontinuously helical span at residues 920–940 (YVGVADTFLALGLFRGLPLVH). The Cytoplasmic segment spans residues 941-991 (TLITVSKILHHKMLHSVLQAPMSTLNTLKAGGILNRFSKDIAILDDLLPLT). Residues 992 to 1012 (IFDFIQLLLIVIGAVAVVSIL) form a helical membrane-spanning segment. The Extracellular segment spans residues 1013 to 1014 (KP). The helical transmembrane segment at 1015-1035 (YIFLATVPVIVAFVLLRAYFL) threads the bilayer. The Cytoplasmic segment spans residues 1036-1096 (HTSQQLKQLE…TANWFLYLST (61 aa)). The chain crosses the membrane as a helical span at residues 1097–1117 (LRWFQMRIEMIFVIFFIAVTF). The Extracellular portion of the chain corresponds to 1118 to 1131 (ISILTTGEGEGTVG). The chain crosses the membrane as a helical span at residues 1132 to 1152 (IILTLAMNIMSTLQWAVNSSI). Residues 1153–1482 (DVDSLMRSVS…TEEEVQDTRL (330 aa)) are Cytoplasmic-facing. The ABC transporter 2 domain maps to 1212-1445 (MTVKDLTAKY…KSLFRQAISP (234 aa)). ATP is bound by residues tyrosine 1221 and 1246-1253 (GRTGSGKS). Positions 1388–1482 (RTLKQAFADC…TEEEVQDTRL (95 aa)) are interaction with GORASP2. The S-palmitoyl cysteine moiety is linked to residue cysteine 1397. The residue at position 1446 (serine 1446) is a Phosphoserine. A disordered region spans residues 1450-1482 (KLFPHQNSGKHKSRSKITALKEETEEEVQDTRL). The segment covering 1472–1482 (ETEEEVQDTRL) has biased composition (acidic residues). Residues 1480 to 1482 (TRL) carry the PDZ-binding motif.

This sequence belongs to the ABC transporter superfamily. ABCC family. CFTR transporter (TC 3.A.1.202) subfamily. In terms of assembly, monomer; does not require oligomerization for channel activity. May form oligomers in the membrane. Interacts with SLC26A3, SLC26A6 and NHERF1. Interacts with SHANK2. Interacts with MYO6. Interacts (via C-terminus) with GOPC (via PDZ domain); this promotes CFTR internalization and thereby decreases channel activity. Interacts with SLC4A7 through NHERF1. Found in a complex with MYO5B and RAB11A. Interacts with ANO1. Interacts with SLC26A8. Interacts with AHCYL1; the interaction increases CFTR activity. Interacts with CSE1L. The core-glycosylated form interacts with GORASP2 (via PDZ GRASP-type 1 domain) in respone to ER stress. Interacts with MARCHF2; the interaction leads to CFTR ubiqtuitination and degradation. Interacts with ADGRG2. Post-translationally, N-glycosylated. In terms of processing, phosphorylated; cAMP treatment promotes phosphorylation and activates the channel. Dephosphorylation decreases the ATPase activity (in vitro). Phosphorylation at PKA sites activates the channel. Phosphorylation at PKC sites enhances the response to phosphorylation by PKA. Phosphorylated by AMPK; this inhibits channel activity. Ubiquitinated, leading to its degradation in the lysosome. Deubiquitination by USP10 in early endosomes enhances its endocytic recycling to the cell membrane. Ubiquitinated by RNF185 during ER stress. Ubiquitinated by MARCHF2.

It localises to the apical cell membrane. The protein localises to the early endosome membrane. It is found in the cell membrane. Its subcellular location is the recycling endosome membrane. The protein resides in the endoplasmic reticulum membrane. It localises to the nucleus. It carries out the reaction ATP + H2O + closed Cl(-) channel = ADP + phosphate + open Cl(-) channel.. The catalysed reaction is chloride(in) = chloride(out). It catalyses the reaction hydrogencarbonate(in) = hydrogencarbonate(out). The enzyme catalyses ATP + H2O = ADP + phosphate + H(+). Functionally, epithelial ion channel that plays an important role in the regulation of epithelial ion and water transport and fluid homeostasis. Mediates the transport of chloride ions across the cell membrane. Possesses an intrinsic ATPase activity and utilizes ATP to gate its channel; the passive flow of anions through the channel is gated by cycles of ATP binding and hydrolysis by the ATP-binding domains. The ion channel is also permeable to HCO(3)(-); selectivity depends on the extracellular chloride concentration. Exerts its function also by modulating the activity of other ion channels and transporters. Contributes to the regulation of the pH and the ion content of the epithelial fluid layer. Modulates the activity of the epithelial sodium channel (ENaC) complex, in part by regulating the cell surface expression of the ENaC complex. May regulate bicarbonate secretion and salvage in epithelial cells by regulating the transporter SLC4A7. Can inhibit the chloride channel activity of ANO1. Plays a role in the chloride and bicarbonate homeostasis during sperm epididymal maturation and capacitation. In Dasypus novemcinctus (Nine-banded armadillo), this protein is Cystic fibrosis transmembrane conductance regulator.